A 402-amino-acid polypeptide reads, in one-letter code: Formate-dependent phosphoribosylglycinamide formyltransferase (402 aa).

Residues 23–24 and E83 contribute to the N(1)-(5-phospho-beta-D-ribosyl)glycinamide site; that span reads EL. Residues R115, K156, 196-199, and E204 contribute to the ATP site; that span reads EEFV. In terms of domain architecture, ATP-grasp spans 120-316; that stretch reads RLAAEKVGVP…EFAIHARAVL (197 aa). Mg(2+) contacts are provided by E274 and E287. Residues D294, K364, and 371–372 each bind N(1)-(5-phospho-beta-D-ribosyl)glycinamide; that span reads RR.

This sequence belongs to the PurK/PurT family. In terms of assembly, homodimer.

The catalysed reaction is N(1)-(5-phospho-beta-D-ribosyl)glycinamide + formate + ATP = N(2)-formyl-N(1)-(5-phospho-beta-D-ribosyl)glycinamide + ADP + phosphate + H(+). Its pathway is purine metabolism; IMP biosynthesis via de novo pathway; N(2)-formyl-N(1)-(5-phospho-D-ribosyl)glycinamide from N(1)-(5-phospho-D-ribosyl)glycinamide (formate route): step 1/1. Involved in the de novo purine biosynthesis. Catalyzes the transfer of formate to 5-phospho-ribosyl-glycinamide (GAR), producing 5-phospho-ribosyl-N-formylglycinamide (FGAR). Formate is provided by PurU via hydrolysis of 10-formyl-tetrahydrofolate. The protein is Formate-dependent phosphoribosylglycinamide formyltransferase of Ignicoccus hospitalis (strain KIN4/I / DSM 18386 / JCM 14125).